The chain runs to 254 residues: Type III pantothenate kinase (254 aa).

6-13 (DLGNSAIK) contributes to the ATP binding site. Substrate-binding positions include Y99 and 106–109 (GVDR). D108 acts as the Proton acceptor in catalysis. D128 provides a ligand contact to K(+). T131 contributes to the ATP binding site. A substrate-binding site is contributed by T182.

It belongs to the type III pantothenate kinase family. Homodimer. Requires NH4(+) as cofactor. It depends on K(+) as a cofactor.

It localises to the cytoplasm. It catalyses the reaction (R)-pantothenate + ATP = (R)-4'-phosphopantothenate + ADP + H(+). Its pathway is cofactor biosynthesis; coenzyme A biosynthesis; CoA from (R)-pantothenate: step 1/5. Functionally, catalyzes the phosphorylation of pantothenate (Pan), the first step in CoA biosynthesis. In Halorhodospira halophila (strain DSM 244 / SL1) (Ectothiorhodospira halophila (strain DSM 244 / SL1)), this protein is Type III pantothenate kinase.